We begin with the raw amino-acid sequence, 618 residues long: Chaperone protein dnaK (618 aa).

The segment at 595 to 618 (SKTETTTPNKNEEDVIDASFSEEK) is disordered.

Belongs to the heat shock protein 70 family.

It localises to the plastid. The protein resides in the cyanelle. Functionally, acts as a chaperone. This chain is Chaperone protein dnaK (dnaK-A), found in Cyanophora paradoxa.